Consider the following 403-residue polypeptide: S-adenosylmethionine synthase (403 aa).

ATP is bound at residue His-17. Asp-19 lines the Mg(2+) pocket. Glu-45 serves as a coordination point for K(+). Residues Glu-58 and Gln-104 each coordinate L-methionine. The flexible loop stretch occupies residues 104 to 114 (QSPDIAQGVDT). ATP is bound by residues 179 to 181 (DGK), 250 to 251 (KF), Asp-259, 265 to 266 (RK), Ala-282, and Lys-286. Asp-259 provides a ligand contact to L-methionine. Lys-290 provides a ligand contact to L-methionine.

The protein belongs to the AdoMet synthase family. Homotetramer; dimer of dimers. It depends on Mg(2+) as a cofactor. K(+) serves as cofactor.

It localises to the cytoplasm. The catalysed reaction is L-methionine + ATP + H2O = S-adenosyl-L-methionine + phosphate + diphosphate. The protein operates within amino-acid biosynthesis; S-adenosyl-L-methionine biosynthesis; S-adenosyl-L-methionine from L-methionine: step 1/1. Catalyzes the formation of S-adenosylmethionine (AdoMet) from methionine and ATP. The overall synthetic reaction is composed of two sequential steps, AdoMet formation and the subsequent tripolyphosphate hydrolysis which occurs prior to release of AdoMet from the enzyme. The sequence is that of S-adenosylmethionine synthase from Mycobacterium ulcerans (strain Agy99).